We begin with the raw amino-acid sequence, 234 residues long: Prolactin-6A1 (234 aa).

The first 33 residues, 1 to 33, serve as a signal peptide directing secretion; sequence MVKSWLRMSKKMEAGTLLMLLMSNILLWENVAS. An N-linked (GlcNAc...) asparagine glycan is attached at asparagine 61. 2 disulfide bridges follow: cysteine 93–cysteine 209 and cysteine 226–cysteine 234.

The protein belongs to the somatotropin/prolactin family.

The protein localises to the secreted. This Rattus norvegicus (Rat) protein is Prolactin-6A1 (Prl6a1).